Here is a 181-residue protein sequence, read N- to C-terminus: Probable calcium-binding protein CML43 (181 aa).

3 EF-hand domains span residues 24–59 (LNALRLHRVFDLFDKNNDGFITVEELSQALSRLGLD), 107–142 (SPESDLEEAFNVFDEDGDGFISAVELQKVLKKLGLP), and 145–180 (GEIEQVEKMIVSVDSNHDGRVDFFEFKNMMQTVVVP). The Ca(2+) site is built by Asp-37, Asn-39, Asp-41, Glu-48, Asp-120, Asp-122, Asp-124, Glu-131, Asp-158, Asn-160, Asp-162, Arg-164, and Glu-169.

In terms of tissue distribution, expressed specifically in roots.

Functionally, calcium-binding protein that may mediate calcium-dependent signal during plant defense response. This chain is Probable calcium-binding protein CML43 (CML43), found in Arabidopsis thaliana (Mouse-ear cress).